The primary structure comprises 118 residues: MARIAGINIPDQKHTVIALTAIFGIGRTRARAICASTSIAEDAKIKELSEAQIDILREEVAKYTVEGDLRREISMNIKRLMDLGCYRGLRHRRSLPLRGQRTKTNARTRKGPRKPIRK.

Positions 94-118 (SLPLRGQRTKTNARTRKGPRKPIRK) are disordered.

The protein belongs to the universal ribosomal protein uS13 family. In terms of assembly, part of the 30S ribosomal subunit. Forms a loose heterodimer with protein S19. Forms two bridges to the 50S subunit in the 70S ribosome.

In terms of biological role, located at the top of the head of the 30S subunit, it contacts several helices of the 16S rRNA. In the 70S ribosome it contacts the 23S rRNA (bridge B1a) and protein L5 of the 50S subunit (bridge B1b), connecting the 2 subunits; these bridges are implicated in subunit movement. Contacts the tRNAs in the A and P-sites. The protein is Small ribosomal subunit protein uS13 of Shewanella frigidimarina (strain NCIMB 400).